We begin with the raw amino-acid sequence, 819 residues long: DNA topoisomerase 4 subunit A (819 aa).

The Topo IIA-type catalytic domain occupies 30-496 (LPDIRDGLKP…QIIEIDTASL (467 aa)). Y118 functions as the O-(5'-phospho-DNA)-tyrosine intermediate in the catalytic mechanism.

Belongs to the type II topoisomerase GyrA/ParC subunit family. ParC type 2 subfamily. Heterotetramer composed of ParC and ParE.

Its subcellular location is the cell membrane. The catalysed reaction is ATP-dependent breakage, passage and rejoining of double-stranded DNA.. Its function is as follows. Topoisomerase IV is essential for chromosome segregation. It relaxes supercoiled DNA. Performs the decatenation events required during the replication of a circular DNA molecule. This chain is DNA topoisomerase 4 subunit A, found in Streptococcus pyogenes serotype M3 (strain SSI-1).